A 157-amino-acid chain; its full sequence is Xanthine-guanine phosphoribosyltransferase (157 aa).

Residues 42-43 (RG) and 93-101 (DDLVDTGNT) each bind 5-phospho-alpha-D-ribose 1-diphosphate. Mg(2+) is bound at residue aspartate 94. The guanine site is built by aspartate 97 and isoleucine 140. Residues aspartate 97 and isoleucine 140 each contribute to the xanthine site. Residues 97 to 101 (DTGNT) and 139 to 140 (WI) contribute to the GMP site.

It belongs to the purine/pyrimidine phosphoribosyltransferase family. XGPT subfamily. Homotetramer. It depends on Mg(2+) as a cofactor.

It is found in the cell inner membrane. It catalyses the reaction GMP + diphosphate = guanine + 5-phospho-alpha-D-ribose 1-diphosphate. It carries out the reaction XMP + diphosphate = xanthine + 5-phospho-alpha-D-ribose 1-diphosphate. The enzyme catalyses IMP + diphosphate = hypoxanthine + 5-phospho-alpha-D-ribose 1-diphosphate. Its pathway is purine metabolism; GMP biosynthesis via salvage pathway; GMP from guanine: step 1/1. It functions in the pathway purine metabolism; XMP biosynthesis via salvage pathway; XMP from xanthine: step 1/1. In terms of biological role, purine salvage pathway enzyme that catalyzes the transfer of the ribosyl-5-phosphate group from 5-phospho-alpha-D-ribose 1-diphosphate (PRPP) to the N9 position of the 6-oxopurines guanine and xanthine to form the corresponding ribonucleotides GMP (guanosine 5'-monophosphate) and XMP (xanthosine 5'-monophosphate), with the release of PPi. To a lesser extent, also acts on hypoxanthine. In Actinobacillus pleuropneumoniae serotype 5b (strain L20), this protein is Xanthine-guanine phosphoribosyltransferase.